We begin with the raw amino-acid sequence, 770 residues long: Pyrophosphate-energized vacuolar membrane proton pump 1 (770 aa).

At 1–9 the chain is on the intravacuolar side; the sequence is MVAPALLPE. The chain crosses the membrane as a helical span at residues 10 to 36; the sequence is LWTEILVPICAVIGIAFSLFQWYVVSR. Over 37–88 the chain is Cytoplasmic; sequence VKLTSDLGASSSGGANNGKNGYGDYLIEEEEGVNDQSVVAKCAEIQTAISEG. The helical transmembrane segment at 89–118 threads the bilayer; sequence ATSFLFTEYKYVGVFMIFFAAVIFVFLGSV. Residues 119 to 139 are Intravacuolar-facing; that stretch reads EGFSTDNKPCTYDTTRTCKPA. Cysteines 128 and 136 form a disulfide. A helical transmembrane segment spans residues 140–167; that stretch reads LATAAFSTIAFVLGAVTSVLSGFLGMKI. Residues 168 to 190 are Cytoplasmic-facing; sequence ATYANARTTLEARKGVGKAFIVA. The chain crosses the membrane as a helical span at residues 191-220; the sequence is FRSGAVMGFLLAASGLLVLYITINVFKIYY. At 221-223 the chain is on the intravacuolar side; it reads GDD. A helical transmembrane segment spans residues 224–252; that stretch reads WEGLFEAITGYGLGGSSMALFGRVGGGIY. At 253–290 the chain is on the cytoplasmic side; that stretch reads TKAADVGADLVGKIERNIPEDDPRNPAVIADNVGDNVG. Substrate is bound at residue Lys254. Residues Asp257, Asp261, and Asp287 each contribute to the Mg(2+) site. The helical transmembrane segment at 291 to 316 threads the bilayer; the sequence is DIAGMGSDLFGSYAEASCAALVVASI. Residues 317 to 324 lie on the Intravacuolar side of the membrane; it reads SSFGINHD. A helical transmembrane segment spans residues 325 to 350; the sequence is FTAMCYPLLISSMGILVCLITTLFAT. Topologically, residues 351–358 are cytoplasmic; sequence DFFEIKLV. The chain crosses the membrane as a helical span at residues 359-386; it reads KEIEPALKNQLIISTVIMTVGIAIVSWV. Over 387-405 the chain is Intravacuolar; that stretch reads GLPTSFTIFNFGTQKVVKN. The helical transmembrane segment at 406-429 threads the bilayer; it reads WQLFLCVCVGLWAGLIIGFVTEYY. Topologically, residues 430–451 are cytoplasmic; that stretch reads TSNAYSPVQDVADSCRTGAATN. The helical transmembrane segment at 452–476 threads the bilayer; it reads VIFGLALGYKSVIIPIFAIAISIFV. The Intravacuolar portion of the chain corresponds to 477-482; the sequence is SFSFAA. A helical membrane pass occupies residues 483-509; it reads MYGVAVAALGMLSTIATGLAIDAYGPI. At 510 to 538 the chain is on the cytoplasmic side; it reads SDNAGGIAEMAGMSHRIRERTDALDAAGN. Residues Asp511 and Asn538 each contribute to the Mg(2+) site. Residues 539 to 567 traverse the membrane as a helical segment; that stretch reads TTAAIGKGFAIGSAALVSLALFGAFVSRA. The Intravacuolar segment spans residues 568 to 577; the sequence is GIHTVDVLTP. The chain crosses the membrane as a helical span at residues 578–606; that stretch reads KVIIGLLVGAMLPYWFSAMTMKSVGSAAL. Topologically, residues 607–635 are cytoplasmic; sequence KMVEEVRRQFNTIPGLMEGTAKPDYATCV. Residues 636–664 form a helical membrane-spanning segment; that stretch reads KISTDASIKEMIPPGCLVMLTPLIVGFFF. Gly665 is a topological domain (intravacuolar). Residues 666 to 693 traverse the membrane as a helical segment; it reads VETLSGVLAGSLVSGVQIAISASNTGGA. Residues 694 to 736 lie on the Cytoplasmic side of the membrane; it reads WDNAKKYIEAGVSEHAKSLGPKGSEPHKAAVIGDTIGDPLKDT. The Mg(2+) site is built by Asp695 and Asp731. Residue Lys734 participates in substrate binding. A helical membrane pass occupies residues 737–762; sequence SGPSLNILIKLMAVESLVFAPFFATH. The Intravacuolar segment spans residues 763 to 770; the sequence is GGILFKYF.

The protein belongs to the H(+)-translocating pyrophosphatase (TC 3.A.10) family. K(+)-stimulated subfamily. As to quaternary structure, monomer. As to expression, ubiquitous (at protein level). Mostly expressed in vascular tissues, meristems and root pericycle.

It is found in the vacuole membrane. Its subcellular location is the endosome membrane. It localises to the cell membrane. It carries out the reaction diphosphate + H2O + H(+)(in) = 2 phosphate + 2 H(+)(out). With respect to regulation, activated by K(+) and Mg(2+). Inhibited by Ca(2+), N,N'-dicyclohexylcarbodiimide (DCCD), N-ethylmaleimide (NEM) and aminomethylenediphosphonate (AMDP), and, to a lower extent, by fluoride (KF). Its function is as follows. Contributes to the transtonoplast (from cytosol to vacuole lumen) H(+)-electrochemical potential difference. It establishes a proton gradient of similar and often greater magnitude than the H(+)-ATPase on the same membrane. In addition, facilitates auxin transport by modulating apoplastic pH and regulates auxin-mediated developmental processes. Confers tolerance to NaCl and to drought by increasing ion retention. This is Pyrophosphate-energized vacuolar membrane proton pump 1 (AVP1) from Arabidopsis thaliana (Mouse-ear cress).